A 406-amino-acid polypeptide reads, in one-letter code: Suppressor protein SRP40 (406 aa).

The segment covering 1–25 has biased composition (basic and acidic residues); that stretch reads MASKKIKVDEVPKLSVKEKEIEEKS. Residues 1 to 335 form a disordered region; the sequence is MASKKIKVDE…EIKEGQRKHF (335 aa). Low complexity predominate over residues 26-115; the sequence is SSSSSSSSSS…SSSSSSSSDE (90 aa). A compositionally biased stretch (basic and acidic residues) spans 125–148; it reads ETKKRARESDNEDAKETKKAKTEP. S133 carries the phosphoserine modification. Low complexity-rich tracts occupy residues 149 to 168, 176 to 186, 194 to 233, and 243 to 268; these read ESSSSSESSSSGSSSSSESE, DSSSSSSSSSD, DSQSSSSSSSSDSSSDSDSSSSDSSSDSDSSSSSSSSSSD, and DSDSSGSSDSSSSSDSSSDESTSSDS. Residues 283–297 are compositionally biased toward basic and acidic residues; it reads LETKEATADESKAEE. T289 carries the phosphothreonine modification. S293 carries the phosphoserine modification. Residues 298–316 show a composition bias toward low complexity; that stretch reads TPASSNESTPSASSSSSAN. A compositionally biased stretch (basic and acidic residues) spans 325–335; it reads DEIKEGQRKHF. S394 carries the phosphoserine modification.

Pyrophosphorylated by 5-diphosphoinositol pentakisphosphate (5-IP7). Serine pyrophosphorylation is achieved by Mg(2+)-dependent, but enzyme independent transfer of a beta-phosphate from a inositol pyrophosphate to a pre-phosphorylated serine residue.

Its function is as follows. Not known; weak suppressor of a mutant of the subunit AC40 of DNA dependent RNA polymerase I and III. The sequence is that of Suppressor protein SRP40 (SRP40) from Saccharomyces cerevisiae (strain ATCC 204508 / S288c) (Baker's yeast).